The sequence spans 360 residues: Putative mRNA-decapping protein (360 aa).

A CCHC-type zinc finger spans residues 11–28; the sequence is HICSNCGRSGHEFRNCIE. Residues 163–347 form the Nudix hydrolase domain; sequence YKYDNILYHF…KKRILTRVYL (185 aa). The Nudix box signature appears at 242 to 264; sequence GRRDKRSEENMVCACREFEEETG. Glutamate 249 lines the Mg(2+) pocket. Glutamate 258 acts as the Nucleophile in catalysis. Mg(2+) is bound at residue glutamate 262.

It belongs to the Nudix hydrolase family. DIPP subfamily. It depends on Mg(2+) as a cofactor. The cofactor is Mn(2+).

It catalyses the reaction diphospho-myo-inositol polyphosphate + H2O = myo-inositol polyphosphate + phosphate.. Might function as a decapping enzyme required for the removal of the 5'-end m7GpppN cap tethered to viral and host mRNAs to allow their decay in cells. In addition to the mRNA cap, probably also efficiently hydrolyzes diphosphoinositol polyphosphates. The polypeptide is Putative mRNA-decapping protein (Acanthamoeba polyphaga (Amoeba)).